The following is a 187-amino-acid chain: dTTP/UTP pyrophosphatase (187 aa).

The active-site Proton acceptor is the Asp-64.

Belongs to the Maf family. YhdE subfamily. Requires a divalent metal cation as cofactor.

It localises to the cytoplasm. The enzyme catalyses dTTP + H2O = dTMP + diphosphate + H(+). It catalyses the reaction UTP + H2O = UMP + diphosphate + H(+). In terms of biological role, nucleoside triphosphate pyrophosphatase that hydrolyzes dTTP and UTP. May have a dual role in cell division arrest and in preventing the incorporation of modified nucleotides into cellular nucleic acids. This chain is dTTP/UTP pyrophosphatase, found in Leptospira interrogans serogroup Icterohaemorrhagiae serovar Lai (strain 56601).